A 376-amino-acid polypeptide reads, in one-letter code: Histidinol-phosphate aminotransferase (376 aa).

A disordered region spans residues 1–21 (MQPRDLSAHEPYVPGRGTKEV). Lys-222 is modified (N6-(pyridoxal phosphate)lysine).

It belongs to the class-II pyridoxal-phosphate-dependent aminotransferase family. Histidinol-phosphate aminotransferase subfamily. Pyridoxal 5'-phosphate serves as cofactor.

It carries out the reaction L-histidinol phosphate + 2-oxoglutarate = 3-(imidazol-4-yl)-2-oxopropyl phosphate + L-glutamate. It functions in the pathway amino-acid biosynthesis; L-histidine biosynthesis; L-histidine from 5-phospho-alpha-D-ribose 1-diphosphate: step 7/9. This Haloquadratum walsbyi (strain DSM 16790 / HBSQ001) protein is Histidinol-phosphate aminotransferase.